The chain runs to 130 residues: Ribosome-binding factor A (130 aa).

The protein belongs to the RbfA family. Monomer. Binds 30S ribosomal subunits, but not 50S ribosomal subunits or 70S ribosomes.

The protein resides in the cytoplasm. Its function is as follows. One of several proteins that assist in the late maturation steps of the functional core of the 30S ribosomal subunit. Associates with free 30S ribosomal subunits (but not with 30S subunits that are part of 70S ribosomes or polysomes). Required for efficient processing of 16S rRNA. May interact with the 5'-terminal helix region of 16S rRNA. This is Ribosome-binding factor A from Flavobacterium johnsoniae (strain ATCC 17061 / DSM 2064 / JCM 8514 / BCRC 14874 / CCUG 350202 / NBRC 14942 / NCIMB 11054 / UW101) (Cytophaga johnsonae).